The sequence spans 156 residues: Small ribosomal subunit protein uS7 (156 aa).

It belongs to the universal ribosomal protein uS7 family. Part of the 30S ribosomal subunit. Contacts proteins S9 and S11.

In terms of biological role, one of the primary rRNA binding proteins, it binds directly to 16S rRNA where it nucleates assembly of the head domain of the 30S subunit. Is located at the subunit interface close to the decoding center, probably blocks exit of the E-site tRNA. This chain is Small ribosomal subunit protein uS7, found in Gloeobacter violaceus (strain ATCC 29082 / PCC 7421).